The primary structure comprises 120 residues: Large ribosomal subunit protein bL20 (120 aa).

The protein belongs to the bacterial ribosomal protein bL20 family.

Functionally, binds directly to 23S ribosomal RNA and is necessary for the in vitro assembly process of the 50S ribosomal subunit. It is not involved in the protein synthesizing functions of that subunit. This is Large ribosomal subunit protein bL20 from Methylobacillus flagellatus (strain ATCC 51484 / DSM 6875 / VKM B-1610 / KT).